The sequence spans 264 residues: Thymidylate synthase 2 (264 aa).

Position 21 (Arg-21) interacts with dUMP. His-51 lines the (6R)-5,10-methylene-5,6,7,8-tetrahydrofolate pocket. 126–127 (RR) is a binding site for dUMP. Cys-146 functions as the Nucleophile in the catalytic mechanism. DUMP-binding positions include 166–169 (RSAD), Asn-177, and 207–209 (HIY). Asp-169 is a binding site for (6R)-5,10-methylene-5,6,7,8-tetrahydrofolate. Ser-263 is a binding site for (6R)-5,10-methylene-5,6,7,8-tetrahydrofolate.

It belongs to the thymidylate synthase family. Bacterial-type ThyA subfamily. As to quaternary structure, homodimer.

It localises to the cytoplasm. The enzyme catalyses dUMP + (6R)-5,10-methylene-5,6,7,8-tetrahydrofolate = 7,8-dihydrofolate + dTMP. It participates in pyrimidine metabolism; dTTP biosynthesis. Its function is as follows. Catalyzes the reductive methylation of 2'-deoxyuridine-5'-monophosphate (dUMP) to 2'-deoxythymidine-5'-monophosphate (dTMP) while utilizing 5,10-methylenetetrahydrofolate (mTHF) as the methyl donor and reductant in the reaction, yielding dihydrofolate (DHF) as a by-product. This enzymatic reaction provides an intracellular de novo source of dTMP, an essential precursor for DNA biosynthesis. This is Thymidylate synthase 2 from Bacillus subtilis (strain 168).